We begin with the raw amino-acid sequence, 349 residues long: Lipoyl synthase (349 aa).

[4Fe-4S] cluster-binding residues include cysteine 55, cysteine 60, cysteine 66, cysteine 81, cysteine 85, cysteine 88, and serine 292. The region spanning 67–281 is the Radical SAM core domain; the sequence is WEDREATFLI…SDAAYELGIK (215 aa). Residues 321-349 are disordered; sequence LDSTTSQEASTLLERYGASEDTPVTASRR.

It belongs to the radical SAM superfamily. Lipoyl synthase family. [4Fe-4S] cluster serves as cofactor.

The protein localises to the cytoplasm. The enzyme catalyses [[Fe-S] cluster scaffold protein carrying a second [4Fe-4S](2+) cluster] + N(6)-octanoyl-L-lysyl-[protein] + 2 oxidized [2Fe-2S]-[ferredoxin] + 2 S-adenosyl-L-methionine + 4 H(+) = [[Fe-S] cluster scaffold protein] + N(6)-[(R)-dihydrolipoyl]-L-lysyl-[protein] + 4 Fe(3+) + 2 hydrogen sulfide + 2 5'-deoxyadenosine + 2 L-methionine + 2 reduced [2Fe-2S]-[ferredoxin]. The protein operates within protein modification; protein lipoylation via endogenous pathway; protein N(6)-(lipoyl)lysine from octanoyl-[acyl-carrier-protein]: step 2/2. Catalyzes the radical-mediated insertion of two sulfur atoms into the C-6 and C-8 positions of the octanoyl moiety bound to the lipoyl domains of lipoate-dependent enzymes, thereby converting the octanoylated domains into lipoylated derivatives. The polypeptide is Lipoyl synthase (Corynebacterium jeikeium (strain K411)).